The sequence spans 69 residues: Small, acid-soluble spore protein I (69 aa).

This sequence belongs to the SspI family.

It localises to the spore core. This is Small, acid-soluble spore protein I from Bacillus mycoides (strain KBAB4) (Bacillus weihenstephanensis).